The following is a 370-amino-acid chain: Pantothenate kinase 3 (370 aa).

Glutamate 138 functions as the Proton acceptor in the catalytic mechanism. Positions 192, 195, and 207 each coordinate acetyl-CoA.

It belongs to the type II pantothenate kinase family. As to quaternary structure, homodimer. In terms of tissue distribution, highly expressed in the liver.

Its subcellular location is the cytoplasm. It catalyses the reaction (R)-pantothenate + ATP = (R)-4'-phosphopantothenate + ADP + H(+). The protein operates within cofactor biosynthesis; coenzyme A biosynthesis; CoA from (R)-pantothenate: step 1/5. With respect to regulation, subject to allosteric regulation, exists in two distinct conformational states, a catalytically incompetent (or open) conformation stabilized by the binding of acetyl(acyl)-CoA, and a catalytically competent (or closed) conformation stabilized by ATP-binding. Inhibited by acetyl-CoA and its thioesters which act as allosteric inhibitors and compete with the ATP-binding site. Inhibited by sulfonylureas and thiazolidinediones. Activated by oleoylethanolamide, palmitoyl-carnitine and oleoyl-carnitine. In terms of biological role, catalyzes the phosphorylation of pantothenate to generate 4'-phosphopantothenate in the first and rate-determining step of coenzyme A (CoA) synthesis. This chain is Pantothenate kinase 3 (PANK3), found in Homo sapiens (Human).